The sequence spans 631 residues: Tumor protein p73 (631 aa).

The tract at residues 1 to 43 is transactivation; sequence MAQTSSSSSSTFEHLWSSLEPDSTYFDLPQPSQGTSEASGSEE. Disordered regions lie at residues 23 to 43 and 69 to 113; these read STYF…GSEE and SRAA…NTDY. T24 is modified (phosphothreonine; by PLK1). Y25 is subject to Phosphotyrosine; by SRC and HCK. Composition is skewed to polar residues over residues 30 to 43 and 86 to 100; these read QPSQ…GSEE and PTHS…TFDT. Y91 bears the Phosphotyrosine; by ABL1 mark. Residues 123–302 form a DNA-binding region; sequence FQQSSTAKSA…DRKADEDHYR (180 aa). Zn(2+) is bound by residues C186, H189, C250, and C254. Residues 306–315 show a composition bias toward polar residues; that stretch reads ALNESTTKNG. The disordered stretch occupies residues 306–334; that stretch reads ALNESTTKNGAASKRAFKQSPPAIPALGT. The segment at 337–372 is interaction with HIPK2; it reads KKRRHGDEDMFYMHVRGRENFEILMKVKESLELMEL. Residues 337–378 form an oligomerization region; it reads KKRRHGDEDMFYMHVRGRENFEILMKVKESLELMELVPQPLV. The PPxY motif signature appears at 477–481; that stretch reads PPPPY. The SAM domain maps to 479–545; it reads PPYHADPSLV…WRGLQDLKQS (67 aa). K622 is covalently cross-linked (Glycyl lysine isopeptide (Lys-Gly) (interchain with G-Cter in SUMO); alternate). K622 is covalently cross-linked (Glycyl lysine isopeptide (Lys-Gly) (interchain with G-Cter in SUMO2); alternate).

This sequence belongs to the p53 family. As to quaternary structure, found in a complex with p53/TP53 and CABLES1. The C-terminal oligomerization domain binds to the ABL1 tyrosine kinase SH3 domain. Interacts with HECW2, HIPK2, RANBP9 and WWOX. Interacts (via SAM domain) with FBXO45 (via B30.2/SPRY domain). Interacts with YAP1 (phosphorylated form). Interacts with HCK (via SH3 domain); this inhibits TP73 activity and degradation. Interacts (via SAM domain) with NQO1; this interaction is NADH-dependent, stabilizes TP73 in response to oxidative stress and protects it from ubiquitin-independent degradation by the 20S proteasome. The cofactor is Zn(2+). Sumoylated on Lys-622, which potentiates proteasomal degradation but does not affect transcriptional activity. In terms of processing, phosphorylation by PLK1 and PLK3 inhibits the transcription regulator activity and pro-apoptotic function. Higher levels of phosphorylation seen in striatal neurons of. mutant huntingtin (htt) transgenic mice. Post-translationally, polyubiquitinated by RCHY1/PIRH2; leading to its degradation by the proteasome. In terms of tissue distribution, found in striatal neurons of mutant huntingtin (htt) transgenic mice (at protein level). Isoform 1 is expressed in the nasal epithelium, the vomeronasal organ, the hippocampus and the hypothalamus.

It is found in the nucleus. It localises to the cytoplasm. Participates in the apoptotic response to DNA damage. Isoforms containing the transactivation domain are pro-apoptotic, isoforms lacking the domain are anti-apoptotic and block the function of p53 and transactivating p73 isoforms. May be a tumor suppressor protein. Is an activator of FOXJ1 expression, essential for the positive regulation of lung ciliated cell differentiation. The protein is Tumor protein p73 (Tp73) of Mus musculus (Mouse).